The following is a 186-amino-acid chain: Ribosome maturation factor RimM (186 aa).

The PRC barrel domain maps to 93–168; it reads EDDFYLVDLI…VLIDPPQEEN (76 aa). Residues 163-186 form a disordered region; it reads PPQEENAPEFGRNELGHDDGGEAA. Residues 173 to 186 are compositionally biased toward basic and acidic residues; that stretch reads GRNELGHDDGGEAA.

This sequence belongs to the RimM family. In terms of assembly, binds ribosomal protein uS19.

It localises to the cytoplasm. Functionally, an accessory protein needed during the final step in the assembly of 30S ribosomal subunit, possibly for assembly of the head region. Essential for efficient processing of 16S rRNA. May be needed both before and after RbfA during the maturation of 16S rRNA. It has affinity for free ribosomal 30S subunits but not for 70S ribosomes. This is Ribosome maturation factor RimM from Granulibacter bethesdensis (strain ATCC BAA-1260 / CGDNIH1).